Consider the following 170-residue polypeptide: Ubiquitin-conjugating enzyme E2 G1 (170 aa).

N-acetylmethionine is present on M1. The residue at position 2 (T2) is an N-acetylthreonine; in Ubiquitin-conjugating enzyme E2 G1, N-terminally processed. In terms of domain architecture, UBC core spans 5-166 (QSALLLRRQL…VARCVRKSQE (162 aa)). The active-site Glycyl thioester intermediate is C90.

This sequence belongs to the ubiquitin-conjugating enzyme family. Autoubiquitinated in vitro. As to expression, widely expressed, mainly in skeletal muscle.

The catalysed reaction is S-ubiquitinyl-[E1 ubiquitin-activating enzyme]-L-cysteine + [E2 ubiquitin-conjugating enzyme]-L-cysteine = [E1 ubiquitin-activating enzyme]-L-cysteine + S-ubiquitinyl-[E2 ubiquitin-conjugating enzyme]-L-cysteine.. Its pathway is protein modification; protein ubiquitination. In terms of biological role, accepts ubiquitin from the E1 complex and catalyzes its covalent attachment to other proteins. In vitro catalyzes 'Lys-48'-, as well as 'Lys-63'-linked polyubiquitination. May be involved in degradation of muscle-specific proteins. Mediates polyubiquitination of CYP3A4. This is Ubiquitin-conjugating enzyme E2 G1 (UBE2G1) from Homo sapiens (Human).